Consider the following 138-residue polypeptide: Type II secretion system protein I (138 aa).

Residues 1 to 6 (MKHQRG) constitute a propeptide, leader sequence. An N-methyltyrosine modification is found at Tyr7. Residues 7–29 (YSLIEVIVAFALLALALTLLLGS) form a helical membrane-spanning segment.

This sequence belongs to the GSP I family. In terms of assembly, type II secretion is composed of four main components: the outer membrane complex, the inner membrane complex, the cytoplasmic secretion ATPase and the periplasm-spanning pseudopilus. Interacts with core component XpsG. In terms of processing, cleaved by prepilin peptidase. Methylated by prepilin peptidase at the amino group of the N-terminal tyrosine once the leader sequence is cleaved by prepilin peptidase.

It is found in the cell inner membrane. In terms of biological role, component of the type II secretion system required for the energy-dependent secretion of extracellular factors such as proteases and toxins from the periplasm. Part of the pseudopilus tip complex that is critical for the recognition and binding of secretion substrates. This is Type II secretion system protein I (xpsI) from Xanthomonas campestris pv. campestris (strain ATCC 33913 / DSM 3586 / NCPPB 528 / LMG 568 / P 25).